We begin with the raw amino-acid sequence, 211 residues long: Uridine kinase (211 aa).

13 to 20 contacts ATP; sequence GGTASGKT.

The protein belongs to the uridine kinase family.

Its subcellular location is the cytoplasm. The enzyme catalyses uridine + ATP = UMP + ADP + H(+). It catalyses the reaction cytidine + ATP = CMP + ADP + H(+). The protein operates within pyrimidine metabolism; CTP biosynthesis via salvage pathway; CTP from cytidine: step 1/3. It participates in pyrimidine metabolism; UMP biosynthesis via salvage pathway; UMP from uridine: step 1/1. In Thermus thermophilus (strain ATCC BAA-163 / DSM 7039 / HB27), this protein is Uridine kinase.